Reading from the N-terminus, the 809-residue chain is MASPAFSHFLPRFGVAAAVASALSLAGCQSWNTQDTLPPTSGVQPLKGLAQNVSVRRNAVGVPLIESSSFHDALFTLGYVHASDRIGQMVTLHLLAQGRLAEMSGADALEVDRLMRAINLKKSADELYKASSPRIKRFFEVYARGVNAYLFRYRDKLPPDLAAQGYTPEYWKAEDSALIFCLLNFGQSANLQEEINALVLAQKVGSDKLPWLTPSYPDEPLPLAEADKLKGLNLTVPGLNEVSRAINRLAQLNSLGTRGGSNLAIAPQRSRTGRSLLAADSHLQAWYYTQIRAPKYQAAGASIAGLPAILQGFNGKVAWSMSSVEGDNQDLFLEKLKRQGNALYYQNNGKWQPVTVRNETYFVKGQRPIREAVYETRHGPLLNSALGAALGNGFGLALQTPELKDDKTLDAFFDLSRAQNVEKASDASREIRAIALNMVFADASNIGWQVTGRFPNRREGEGLLPSPGWDGRYDWDGYADPMLHPYDQDPPQGWIATANQRVISQGYGMQLSNSWHAPERAERMAGLASSGKQDNRSLIALQYDQSTLFAAKLKKMFEAPGMAQPLKQAIEALPDTERAKAREAYSRLLAFDGKVSAGSADAALYELFLQESAKQIFLDKLGPESSDAWQAFVANGNLSYSAQADHLLGQEDSPFWDDSRTAQKEDKPAILARSLAAAISSGEQLLGADRKAWQWGKLHSYQWTNANGRQIRGPLQAGGDHNTINSAAYRWGQDFAITDTPALRLIVDFSLSEPLMGLNSSGQSGNPVSPNYANGIDGWLKAQYLSLPMQPQNFERSYGKTRLTLVPGK.

An N-terminal signal peptide occupies residues 1 to 26; it reads MASPAFSHFLPRFGVAAAVASALSLA. Residue S261 is the Nucleophile of the active site.

The protein belongs to the peptidase S45 family. As to quaternary structure, heterodimer of an alpha subunit and a beta subunit processed from the same precursor.

Its subcellular location is the periplasm. The catalysed reaction is an N-acyl-L-homoserine lactone + H2O = L-homoserine lactone + a carboxylate. In terms of biological role, catalyzes the deacylation of acyl-homoserine lactone (AHL or acyl-HSL), releasing homoserine lactone (HSL) and the corresponding fatty acid. Possesses a specificity for the degradation of long-chain acyl-HSLs (side chains of seven or more carbons in length). The chain is Acyl-homoserine lactone acylase QuiP (quiP) from Pseudomonas fluorescens (strain ATCC BAA-477 / NRRL B-23932 / Pf-5).